The chain runs to 126 residues: Acidic phospholipase A2 2 (126 aa).

A propeptide spanning residues 1-7 (SNRPMPL) is cleaved from the precursor. Disulfide bonds link Cys18–Cys78, Cys33–Cys125, Cys35–Cys51, Cys50–Cys106, Cys57–Cys99, Cys67–Cys92, and Cys85–Cys97. Residues Tyr34, Gly36, and Gly38 each contribute to the Ca(2+) site. Residue His54 is part of the active site. Asp55 is a binding site for Ca(2+). Asp100 is a catalytic residue.

Belongs to the phospholipase A2 family. Group I subfamily. D49 sub-subfamily. In terms of assembly, heterodimer formed between two homologous isoforms: isoform 1 and isoform 2. Ca(2+) serves as cofactor. Expressed by the venom gland.

The protein resides in the secreted. The catalysed reaction is a 1,2-diacyl-sn-glycero-3-phosphocholine + H2O = a 1-acyl-sn-glycero-3-phosphocholine + a fatty acid + H(+). In terms of biological role, PLA2 catalyzes the calcium-dependent hydrolysis of the 2-acyl groups in 3-sn-phosphoglycerides. The chain is Acidic phospholipase A2 2 from Naja sagittifera (Andaman cobra).